The sequence spans 580 residues: Probable inactive 1-aminocyclopropane-1-carboxylate synthase-like protein 2 (580 aa).

The interval 1–43 (MSENRNEGSSQAAKANSDTQTPSHFKVTHPRLRDQLKKKSSKK) is disordered. Over residues 7–23 (EGSSQAAKANSDTQTPS) the composition is skewed to polar residues. Lys417 is subject to N6-(pyridoxal phosphate)lysine.

It belongs to the class-I pyridoxal-phosphate-dependent aminotransferase family.

This Mus musculus (Mouse) protein is Probable inactive 1-aminocyclopropane-1-carboxylate synthase-like protein 2 (Accsl).